Consider the following 311-residue polypeptide: Olfactory receptor 10J4 (311 aa).

The Extracellular portion of the chain corresponds to 1–29; that stretch reads MPRPNFMAVTEFTFEGFSIFEWHHRLILF. The chain crosses the membrane as a helical span at residues 30-50; sequence VIFLVLYVLTLASNAIILIVI. The Cytoplasmic portion of the chain corresponds to 51–57; the sequence is RLNHQLH. Residues 58–78 traverse the membrane as a helical segment; the sequence is TPMYFFLSVLSISETYYTVAI. Over 79 to 98 the chain is Extracellular; the sequence is NPQMLSGLLSPQQTISIPGC. Cys-98 and Cys-180 are disulfide-bonded. A helical transmembrane segment spans residues 99–119; it reads AAQLFFYLTFGVNKCFLLTAM. Residues 120-149 lie on the Cytoplasmic side of the membrane; that stretch reads GYDHYVAICNPLQYSVIMGKKACIQLVSGS. The helical transmembrane segment at 150–170 threads the bilayer; that stretch reads WNIGLSTAIIQVSSVFSLPFC. The Extracellular portion of the chain corresponds to 171-202; it reads DANLISHFFCDIRPIMKLACADTTIKEFITLL. Residues 203–223 traverse the membrane as a helical segment; that stretch reads ISLCVLVLPMVLIFISYVLIV. Topologically, residues 224 to 237 are cytoplasmic; that stretch reads TTILKIASAEGRRK. A helical membrane pass occupies residues 238 to 254; it reads AFATCASHLTVVIVHYG. Over 255–272 the chain is Extracellular; sequence RTSFIYLKPKSQNSLQDR. Residues 273 to 292 form a helical membrane-spanning segment; sequence LISVTYTVITPLLNPVVYSL. Topologically, residues 293-311 are cytoplasmic; it reads RNKEVKDALLRALGRKPLS.

This sequence belongs to the G-protein coupled receptor 1 family.

It localises to the cell membrane. In terms of biological role, odorant receptor. The protein is Olfactory receptor 10J4 (OR10J4) of Homo sapiens (Human).